The sequence spans 205 residues: Endoplasmic reticulum membrane protein complex subunit 10 (205 aa).

An N-terminal signal peptide occupies residues 1–17 (MLVRLLRVILLASMVFC). The Lumenal portion of the chain corresponds to 18–172 (ADILQLSYSD…VKEVSWFQKN (155 aa)). An N-linked (GlcNAc...) asparagine glycan is attached at Asn47. Residues 173 to 190 (WKMLLLGLLIYNFVAGSA) form a helical membrane-spanning segment. Residues 191 to 205 (KKQQQGGAGADQKTE) are Cytoplasmic-facing.

Component of the ER membrane protein complex (EMC).

It is found in the endoplasmic reticulum membrane. Its function is as follows. Part of the endoplasmic reticulum membrane protein complex (EMC) that enables the energy-independent insertion into endoplasmic reticulum membranes of newly synthesized membrane proteins. Preferentially accommodates proteins with transmembrane domains that are weakly hydrophobic or contain destabilizing features such as charged and aromatic residues. Involved in the cotranslational insertion of multi-pass membrane proteins in which stop-transfer membrane-anchor sequences become ER membrane spanning helices. It is also required for the post-translational insertion of tail-anchored/TA proteins in endoplasmic reticulum membranes. By mediating the proper cotranslational insertion of N-terminal transmembrane domains in an N-exo topology, with translocated N-terminus in the lumen of the ER, controls the topology of multi-pass membrane proteins. This Saccharomyces cerevisiae (strain ATCC 204508 / S288c) (Baker's yeast) protein is Endoplasmic reticulum membrane protein complex subunit 10.